A 301-amino-acid polypeptide reads, in one-letter code: Protoheme IX farnesyltransferase (301 aa).

9 helical membrane passes run 20–42 (FTEL…GMWL), 55–75 (VDVI…SGAF), 105–125 (ALMV…MTTW), 126–146 (QAGV…SLYA), 150–172 (LVSN…WFAV), 176–198 (FSIV…FYAI), 227–247 (MFFW…LGIV), 249–269 (VVLA…GFKM), and 280–300 (FVYS…ISIF).

The protein belongs to the UbiA prenyltransferase family. Protoheme IX farnesyltransferase subfamily. As to quaternary structure, interacts with CtaA.

The protein resides in the cell membrane. The enzyme catalyses heme b + (2E,6E)-farnesyl diphosphate + H2O = Fe(II)-heme o + diphosphate. It functions in the pathway porphyrin-containing compound metabolism; heme O biosynthesis; heme O from protoheme: step 1/1. Converts heme B (protoheme IX) to heme O by substitution of the vinyl group on carbon 2 of heme B porphyrin ring with a hydroxyethyl farnesyl side group. The protein is Protoheme IX farnesyltransferase of Listeria monocytogenes serotype 4b (strain CLIP80459).